We begin with the raw amino-acid sequence, 350 residues long: 4-hydroxy-2-oxovalerate aldolase 3 (350 aa).

Residues 13–265 (VVFHDMCLRD…DTGVDLFRLM (253 aa)) form the Pyruvate carboxyltransferase domain. 21-22 (RD) contacts substrate. Mn(2+) is bound at residue Asp-22. The active-site Proton acceptor is the His-25. 2 residues coordinate substrate: Ser-175 and His-204. Residues His-204 and His-206 each coordinate Mn(2+). Residue Tyr-295 participates in substrate binding.

This sequence belongs to the 4-hydroxy-2-oxovalerate aldolase family.

It catalyses the reaction (S)-4-hydroxy-2-oxopentanoate = acetaldehyde + pyruvate. In Azotobacter vinelandii (strain DJ / ATCC BAA-1303), this protein is 4-hydroxy-2-oxovalerate aldolase 3 (lapG).